Reading from the N-terminus, the 168-residue chain is Photosystem I assembly protein Ycf3 (168 aa).

TPR repeat units lie at residues 35–68, 72–105, and 120–153; these read AFTY…EIDP, SYIL…NPFL, and GEQA…TPGN.

It belongs to the Ycf3 family.

It localises to the plastid. The protein resides in the chloroplast thylakoid membrane. Functionally, essential for the assembly of the photosystem I (PSI) complex. May act as a chaperone-like factor to guide the assembly of the PSI subunits. The sequence is that of Photosystem I assembly protein Ycf3 from Chloranthus spicatus (Chulantree).